We begin with the raw amino-acid sequence, 964 residues long: Protein translocase subunit SecA (964 aa).

ATP-binding positions include glutamine 86, glycine 104–threonine 108, and aspartate 494. A disordered region spans residues alanine 848–lysine 964. Positions alanine 871–threonine 882 are enriched in acidic residues. Low complexity predominate over residues alanine 889–serine 900. Zn(2+) is bound by residues cysteine 947, cysteine 949, cysteine 958, and histidine 959.

It belongs to the SecA family. In terms of assembly, monomer and homodimer. Part of the essential Sec protein translocation apparatus which comprises SecA, SecYEG and auxiliary proteins SecDF. Other proteins may also be involved. Requires Zn(2+) as cofactor.

It is found in the cell membrane. Its subcellular location is the cytoplasm. The enzyme catalyses ATP + H2O + cellular proteinSide 1 = ADP + phosphate + cellular proteinSide 2.. Functionally, part of the Sec protein translocase complex. Interacts with the SecYEG preprotein conducting channel. Has a central role in coupling the hydrolysis of ATP to the transfer of proteins into and across the cell membrane, serving as an ATP-driven molecular motor driving the stepwise translocation of polypeptide chains across the membrane. The protein is Protein translocase subunit SecA of Bifidobacterium longum (strain NCC 2705).